Reading from the N-terminus, the 440-residue chain is GTPase Der (440 aa).

2 consecutive EngA-type G domains span residues Pro4–Lys168 and Ile177–Ser352. GTP-binding positions include Gly10–Ser17, Asp57–Leu61, Asn120–Glu123, Gly183–Ser190, Asp230–Met234, and Asn295–Asp298. Residues Met353–Thr437 enclose the KH-like domain.

Belongs to the TRAFAC class TrmE-Era-EngA-EngB-Septin-like GTPase superfamily. EngA (Der) GTPase family. Associates with the 50S ribosomal subunit.

Its function is as follows. GTPase that plays an essential role in the late steps of ribosome biogenesis. The polypeptide is GTPase Der (Pelotomaculum thermopropionicum (strain DSM 13744 / JCM 10971 / SI)).